Consider the following 329-residue polypeptide: Catabolite control protein A (329 aa).

The region spanning 1–57 (MTVTIYDVAREARVSMATVSRVVNGNQNVKAETKNKVNEVIKRLNYRPNAVARGLAS) is the HTH lacI-type domain. The segment at residues 5 to 24 (IYDVAREARVSMATVSRVVN) is a DNA-binding region (H-T-H motif).

Global transcriptional regulator of carbon catabolite repression (CCR) and carbon catabolite activation (CCA), which ensures optimal energy usage under diverse conditions. In Staphylococcus aureus (strain COL), this protein is Catabolite control protein A (ccpA).